A 246-amino-acid polypeptide reads, in one-letter code: Polyhedrin (246 aa).

The protein belongs to the polyhedrin family.

Its function is as follows. Major component of the virus occlusion bodies, which are large proteinaceous structures (polyhedra), that protect the virus from the outside environment for extended periods until they are ingested by insect larvae. This chain is Polyhedrin (PH), found in Mamestra brassicae nuclear polyhedrosis virus (MbNPV).